The following is a 467-amino-acid chain: Uronate isomerase (467 aa).

The protein belongs to the metallo-dependent hydrolases superfamily. Uronate isomerase family.

It carries out the reaction D-glucuronate = D-fructuronate. It catalyses the reaction aldehydo-D-galacturonate = keto-D-tagaturonate. It functions in the pathway carbohydrate metabolism; pentose and glucuronate interconversion. The sequence is that of Uronate isomerase from Histophilus somni (strain 2336) (Haemophilus somnus).